Consider the following 292-residue polypeptide: Formamidopyrimidine-DNA glycosylase (292 aa).

The active-site Schiff-base intermediate with DNA is P2. The Proton donor role is filled by E3. The active-site Proton donor; for beta-elimination activity is K60. Residues H109, R128, and R173 each contribute to the DNA site. The FPG-type zinc finger occupies 258–292 (NVYRRTGRECRKCGNLIERQKITGRSTHWCPNCQK). The Proton donor; for delta-elimination activity role is filled by R282.

The protein belongs to the FPG family. In terms of assembly, monomer. It depends on Zn(2+) as a cofactor.

The catalysed reaction is Hydrolysis of DNA containing ring-opened 7-methylguanine residues, releasing 2,6-diamino-4-hydroxy-5-(N-methyl)formamidopyrimidine.. It carries out the reaction 2'-deoxyribonucleotide-(2'-deoxyribose 5'-phosphate)-2'-deoxyribonucleotide-DNA = a 3'-end 2'-deoxyribonucleotide-(2,3-dehydro-2,3-deoxyribose 5'-phosphate)-DNA + a 5'-end 5'-phospho-2'-deoxyribonucleoside-DNA + H(+). In terms of biological role, involved in base excision repair of DNA damaged by oxidation or by mutagenic agents. Acts as a DNA glycosylase that recognizes and removes damaged bases. Has a preference for oxidized purines, such as 7,8-dihydro-8-oxoguanine (8-oxoG). Has AP (apurinic/apyrimidinic) lyase activity and introduces nicks in the DNA strand. Cleaves the DNA backbone by beta-delta elimination to generate a single-strand break at the site of the removed base with both 3'- and 5'-phosphates. This chain is Formamidopyrimidine-DNA glycosylase, found in Prochlorococcus marinus (strain MIT 9301).